The primary structure comprises 331 residues: Glycerol-3-phosphate dehydrogenase [NAD(P)+] (331 aa).

Positions 10, 11, 31, 32, and 105 each coordinate NADPH. Positions 105 and 135 each coordinate sn-glycerol 3-phosphate. Residue Ala139 coordinates NADPH. Sn-glycerol 3-phosphate is bound by residues Lys190, Asp243, Ser253, Arg254, and Asn255. The Proton acceptor role is filled by Lys190. Arg254 is an NADPH binding site. Residues Val279 and Glu281 each coordinate NADPH.

This sequence belongs to the NAD-dependent glycerol-3-phosphate dehydrogenase family.

The protein resides in the cytoplasm. It carries out the reaction sn-glycerol 3-phosphate + NAD(+) = dihydroxyacetone phosphate + NADH + H(+). The enzyme catalyses sn-glycerol 3-phosphate + NADP(+) = dihydroxyacetone phosphate + NADPH + H(+). The protein operates within membrane lipid metabolism; glycerophospholipid metabolism. Functionally, catalyzes the reduction of the glycolytic intermediate dihydroxyacetone phosphate (DHAP) to sn-glycerol 3-phosphate (G3P), the key precursor for phospholipid synthesis. This chain is Glycerol-3-phosphate dehydrogenase [NAD(P)+], found in Corynebacterium diphtheriae (strain ATCC 700971 / NCTC 13129 / Biotype gravis).